A 692-amino-acid chain; its full sequence is UvrABC system protein B (692 aa).

The region spanning 32-187 (ENIENGEKAQ…LLNDLVGIQF (156 aa)) is the Helicase ATP-binding domain. 45-52 (GATGTGKT) contributes to the ATP binding site. The Beta-hairpin motif lies at 98–121 (YYDYYQPEAYVPSSDTYIEKDSSV). The Helicase C-terminal domain maps to 436 to 631 (QIDDLVGEIH…TIKKEIRDLI (196 aa)). Residues 656–691 (KALVKKLEKEMQQAAAALDFEGAAQLRDMVLELRAM) form the UVR domain.

Belongs to the UvrB family. Forms a heterotetramer with UvrA during the search for lesions. Interacts with UvrC in an incision complex.

The protein localises to the cytoplasm. The UvrABC repair system catalyzes the recognition and processing of DNA lesions. A damage recognition complex composed of 2 UvrA and 2 UvrB subunits scans DNA for abnormalities. Upon binding of the UvrA(2)B(2) complex to a putative damaged site, the DNA wraps around one UvrB monomer. DNA wrap is dependent on ATP binding by UvrB and probably causes local melting of the DNA helix, facilitating insertion of UvrB beta-hairpin between the DNA strands. Then UvrB probes one DNA strand for the presence of a lesion. If a lesion is found the UvrA subunits dissociate and the UvrB-DNA preincision complex is formed. This complex is subsequently bound by UvrC and the second UvrB is released. If no lesion is found, the DNA wraps around the other UvrB subunit that will check the other stand for damage. In Lactococcus lactis subsp. cremoris (strain SK11), this protein is UvrABC system protein B.